We begin with the raw amino-acid sequence, 128 residues long: Riboflavin kinase (128 aa).

12 to 17 contacts CDP; that stretch reads GKGEGK. Threonine 41 and asparagine 43 together coordinate Mg(2+). Threonine 97 and glutamate 105 together coordinate FMN. Position 110-113 (110-113) interacts with CDP; the sequence is IKLR.

It belongs to the archaeal riboflavin kinase family. Mg(2+) is required as a cofactor.

It carries out the reaction riboflavin + CTP = CDP + FMN + H(+). Its pathway is cofactor biosynthesis; FMN biosynthesis; FMN from riboflavin (CTP route): step 1/1. Its function is as follows. Catalyzes the CTP-dependent phosphorylation of riboflavin (vitamin B2) to form flavin mononucleotide (FMN). This is Riboflavin kinase from Methanococcus aeolicus (strain ATCC BAA-1280 / DSM 17508 / OCM 812 / Nankai-3).